The sequence spans 832 residues: Protein P (832 aa).

The terminal protein domain (TP) stretch occupies residues methionine 1–glutamine 177. Residues lysine 178–leucine 335 form a spacer region. 2 disordered regions span residues phenylalanine 186–serine 229 and tyrosine 275–serine 305. Residues glutamate 336 to glutamine 679 form a polymerase/reverse transcriptase domain (RT) region. Residues glutamate 346 to isoleucine 589 enclose the Reverse transcriptase domain. Aspartate 418, aspartate 540, and aspartate 541 together coordinate Mg(2+).

This sequence belongs to the hepadnaviridae P protein family.

The catalysed reaction is DNA(n) + a 2'-deoxyribonucleoside 5'-triphosphate = DNA(n+1) + diphosphate. It catalyses the reaction Endonucleolytic cleavage to 5'-phosphomonoester.. Activated by host HSP70 and HSP40 in vitro to be able to bind the epsilon loop of the pgRNA. Because deletion of the RNase H region renders the protein partly chaperone-independent, the chaperones may be needed indirectly to relieve occlusion of the RNA-binding site by this domain. Inhibited by several reverse-transcriptase inhibitors: Lamivudine, Adefovir and Entecavir. In terms of biological role, multifunctional enzyme that converts the viral RNA genome into dsDNA in viral cytoplasmic capsids. This enzyme displays a DNA polymerase activity that can copy either DNA or RNA templates, and a ribonuclease H (RNase H) activity that cleaves the RNA strand of RNA-DNA heteroduplexes in a partially processive 3'- to 5'-endonucleasic mode. Neo-synthesized pregenomic RNA (pgRNA) are encapsidated together with the P protein, and reverse-transcribed inside the nucleocapsid. Initiation of reverse-transcription occurs first by binding the epsilon loop on the pgRNA genome, and is initiated by protein priming, thereby the 5'-end of (-)DNA is covalently linked to P protein. Partial (+)DNA is synthesized from the (-)DNA template and generates the relaxed circular DNA (RC-DNA) genome. After budding and infection, the RC-DNA migrates in the nucleus, and is converted into a plasmid-like covalently closed circular DNA (cccDNA). The activity of P protein does not seem to be necessary for cccDNA generation, and is presumably released from (+)DNA by host nuclear DNA repair machinery. This is Protein P from Homo sapiens (Human).